A 264-amino-acid polypeptide reads, in one-letter code: Potassium channel regulatory protein (264 aa).

In terms of domain architecture, BTB spans 5–74; that stretch reads DLVTLNVGGR…LRNHELLLPS (70 aa).

As to quaternary structure, can form homooligomers. Interacts with KCNA1 (via cytoplasmic N-terminal domain) and KCNA4.

The protein resides in the endoplasmic reticulum. Inhibits potassium fluxes in cells. May regulate Kv1 family channel proteins by retaining a fraction of channels in endomembranes. The protein is Potassium channel regulatory protein (Kcnrg) of Mus musculus (Mouse).